We begin with the raw amino-acid sequence, 278 residues long: 2-dehydro-3-deoxyphosphooctonate aldolase (278 aa).

Belongs to the KdsA family.

Its subcellular location is the cytoplasm. The enzyme catalyses D-arabinose 5-phosphate + phosphoenolpyruvate + H2O = 3-deoxy-alpha-D-manno-2-octulosonate-8-phosphate + phosphate. The protein operates within carbohydrate biosynthesis; 3-deoxy-D-manno-octulosonate biosynthesis; 3-deoxy-D-manno-octulosonate from D-ribulose 5-phosphate: step 2/3. It functions in the pathway bacterial outer membrane biogenesis; lipopolysaccharide biosynthesis. The protein is 2-dehydro-3-deoxyphosphooctonate aldolase of Koribacter versatilis (strain Ellin345).